Consider the following 69-residue polypeptide: Cytochrome c oxidase subunit 8A, mitochondrial (69 aa).

The transit peptide at methionine 1–glutamine 25 directs the protein to the mitochondrion. The short motif at serine 2 to leucine 19 is the SIFI-degron element. The Mitochondrial matrix portion of the chain corresponds to valine 26–glycine 36. Residues threonine 37 to serine 60 form a helical membrane-spanning segment. Topologically, residues histidine 61 to glutamate 69 are mitochondrial intermembrane.

This sequence belongs to the cytochrome c oxidase VIII family. Component of the cytochrome c oxidase (complex IV, CIV), a multisubunit enzyme composed of 14 subunits. The complex is composed of a catalytic core of 3 subunits MT-CO1, MT-CO2 and MT-CO3, encoded in the mitochondrial DNA, and 11 supernumerary subunits COX4I, COX5A, COX5B, COX6A, COX6B, COX6C, COX7A, COX7B, COX7C, COX8 and NDUFA4, which are encoded in the nuclear genome. The complex exists as a monomer or a dimer and forms supercomplexes (SCs) in the inner mitochondrial membrane with NADH-ubiquinone oxidoreductase (complex I, CI) and ubiquinol-cytochrome c oxidoreductase (cytochrome b-c1 complex, complex III, CIII), resulting in different assemblies (supercomplex SCI(1)III(2)IV(1) and megacomplex MCI(2)III(2)IV(2)). In terms of processing, in response to mitochondrial stress, the precursor protein is ubiquitinated by the SIFI complex in the cytoplasm before mitochondrial import, leading to its degradation. Within the SIFI complex, UBR4 initiates ubiquitin chain that are further elongated or branched by KCMF1.

It localises to the mitochondrion inner membrane. Its pathway is energy metabolism; oxidative phosphorylation. In terms of biological role, component of the cytochrome c oxidase, the last enzyme in the mitochondrial electron transport chain which drives oxidative phosphorylation. The respiratory chain contains 3 multisubunit complexes succinate dehydrogenase (complex II, CII), ubiquinol-cytochrome c oxidoreductase (cytochrome b-c1 complex, complex III, CIII) and cytochrome c oxidase (complex IV, CIV), that cooperate to transfer electrons derived from NADH and succinate to molecular oxygen, creating an electrochemical gradient over the inner membrane that drives transmembrane transport and the ATP synthase. Cytochrome c oxidase is the component of the respiratory chain that catalyzes the reduction of oxygen to water. Electrons originating from reduced cytochrome c in the intermembrane space (IMS) are transferred via the dinuclear copper A center (CU(A)) of subunit 2 and heme A of subunit 1 to the active site in subunit 1, a binuclear center (BNC) formed by heme A3 and copper B (CU(B)). The BNC reduces molecular oxygen to 2 water molecules using 4 electrons from cytochrome c in the IMS and 4 protons from the mitochondrial matrix. This chain is Cytochrome c oxidase subunit 8A, mitochondrial (COX8A), found in Eulemur fulvus fulvus (Brown lemur).